A 79-amino-acid chain; its full sequence is uncharacterized protein (79 aa).

Residues 1 to 33 (MRLSIRAIVLFALVWIGLLMSGYGVLVGSKVNA) form the signal peptide.

This is an uncharacterized protein from Salmonella paratyphi A (strain ATCC 9150 / SARB42).